A 329-amino-acid chain; its full sequence is Phenylalanine--tRNA ligase alpha subunit (329 aa).

Residue E254 coordinates Mg(2+).

It belongs to the class-II aminoacyl-tRNA synthetase family. Phe-tRNA synthetase alpha subunit type 1 subfamily. In terms of assembly, tetramer of two alpha and two beta subunits. The cofactor is Mg(2+).

Its subcellular location is the cytoplasm. It carries out the reaction tRNA(Phe) + L-phenylalanine + ATP = L-phenylalanyl-tRNA(Phe) + AMP + diphosphate + H(+). The sequence is that of Phenylalanine--tRNA ligase alpha subunit from Actinobacillus succinogenes (strain ATCC 55618 / DSM 22257 / CCUG 43843 / 130Z).